The primary structure comprises 153 residues: ORM1-like protein 2 (153 aa).

Residues 1–21 are Cytoplasmic-facing; the sequence is MNVGVAHSEVNPNTRVMNSRG. Helical transmembrane passes span 22–42 and 43–63; these read IWLA…SIPF and FSIP…MYVF. Residues 64-105 lie on the Cytoplasmic side of the membrane; that stretch reads LHTVKGTPFETPDQGKARLLTHWEQMDYGLQFTSSRKFLSIS. The helical transmembrane segment at 106–126 threads the bilayer; that stretch reads PIVLYLLASFYTKYDAAHFLI. The Extracellular portion of the chain corresponds to 127–153; the sequence is NTASLLSVLLPKLPQFHGVRLFGINKY.

It belongs to the ORM family. In terms of assembly, ceramide-sensitive subunit of the serine palmitoyltransferase (SPT) complex, which is also composed of SPTLC1, SPTLC2/3 and SPTSSA/B.

The protein localises to the endoplasmic reticulum membrane. Plays an essential role in the homeostatic regulation of sphingolipid de novo biosynthesis by modulating the activity of the serine palmitoyltransferase (SPT) in response to ceramide levels. When complexed to SPT, the binding of ceramides to its N-terminus stabilizes a conformation that block SPT substrate entry, hence preventing SPT catalytic activity. Through this mechanism, maintains ceramide levels at sufficient concentrations for the production of complex sphingolipids, but which prevents the accumulation of ceramides to levels that trigger apoptosis. This chain is ORM1-like protein 2 (ORMDL2), found in Bos taurus (Bovine).